Reading from the N-terminus, the 280-residue chain is Protein synthesis inhibitor II (280 aa).

Alanine 1 carries the post-translational modification N-acetylalanine. Glutamate 174 is a catalytic residue.

It belongs to the ribosome-inactivating protein family. Type 1 RIP subfamily.

Its subcellular location is the cytoplasm. It catalyses the reaction Endohydrolysis of the N-glycosidic bond at one specific adenosine on the 28S rRNA.. Its function is as follows. Inhibits the elongation phase of protein synthesis. It inactivates fungal ribosomes even more effectively than mammalian ribosomes and is thought to function as a constitutive antifungal agent in plants. The chain is Protein synthesis inhibitor II (RIP30A) from Hordeum vulgare (Barley).